A 327-amino-acid polypeptide reads, in one-letter code: Phenylalanine--tRNA ligase alpha subunit (327 aa).

Residue Glu-252 coordinates Mg(2+).

It belongs to the class-II aminoacyl-tRNA synthetase family. Phe-tRNA synthetase alpha subunit type 1 subfamily. Tetramer of two alpha and two beta subunits. It depends on Mg(2+) as a cofactor.

Its subcellular location is the cytoplasm. The enzyme catalyses tRNA(Phe) + L-phenylalanine + ATP = L-phenylalanyl-tRNA(Phe) + AMP + diphosphate + H(+). This chain is Phenylalanine--tRNA ligase alpha subunit, found in Edwardsiella ictaluri (strain 93-146).